Reading from the N-terminus, the 231-residue chain is Flagellar L-ring protein (231 aa).

A signal peptide spans Met-1–Gly-18. Residue Cys-19 is the site of N-palmitoyl cysteine attachment. The S-diacylglycerol cysteine moiety is linked to residue Cys-19.

It belongs to the FlgH family. As to quaternary structure, the basal body constitutes a major portion of the flagellar organelle and consists of four rings (L,P,S, and M) mounted on a central rod.

Its subcellular location is the cell outer membrane. It is found in the bacterial flagellum basal body. Its function is as follows. Assembles around the rod to form the L-ring and probably protects the motor/basal body from shearing forces during rotation. The polypeptide is Flagellar L-ring protein (Pseudomonas fluorescens (strain ATCC BAA-477 / NRRL B-23932 / Pf-5)).